Consider the following 238-residue polypeptide: Sugar fermentation stimulation protein homolog (238 aa).

Belongs to the SfsA family.

In Pseudomonas entomophila (strain L48), this protein is Sugar fermentation stimulation protein homolog.